The primary structure comprises 494 residues: Glycerol kinase (494 aa).

Thr-13 lines the ADP pocket. The ATP site is built by Thr-13, Thr-14, and Ser-15. A sn-glycerol 3-phosphate-binding site is contributed by Thr-13. Residue Arg-17 participates in ADP binding. Arg-83, Glu-84, Tyr-135, and Asp-244 together coordinate sn-glycerol 3-phosphate. Glycerol-binding residues include Arg-83, Glu-84, Tyr-135, Asp-244, and Gln-245. 2 residues coordinate ADP: Thr-266 and Gly-309. Positions 266, 309, 313, and 410 each coordinate ATP. ADP-binding residues include Gly-410 and Asn-414.

It belongs to the FGGY kinase family.

The catalysed reaction is glycerol + ATP = sn-glycerol 3-phosphate + ADP + H(+). It functions in the pathway polyol metabolism; glycerol degradation via glycerol kinase pathway; sn-glycerol 3-phosphate from glycerol: step 1/1. With respect to regulation, inhibited by fructose 1,6-bisphosphate (FBP). Its function is as follows. Key enzyme in the regulation of glycerol uptake and metabolism. Catalyzes the phosphorylation of glycerol to yield sn-glycerol 3-phosphate. In Shewanella putrefaciens (strain CN-32 / ATCC BAA-453), this protein is Glycerol kinase.